The primary structure comprises 181 residues: Adenine phosphoribosyltransferase (181 aa).

This sequence belongs to the purine/pyrimidine phosphoribosyltransferase family. As to quaternary structure, homodimer.

It is found in the cytoplasm. The enzyme catalyses AMP + diphosphate = 5-phospho-alpha-D-ribose 1-diphosphate + adenine. The protein operates within purine metabolism; AMP biosynthesis via salvage pathway; AMP from adenine: step 1/1. In terms of biological role, catalyzes a salvage reaction resulting in the formation of AMP, that is energically less costly than de novo synthesis. The sequence is that of Adenine phosphoribosyltransferase from Methylobacterium nodulans (strain LMG 21967 / CNCM I-2342 / ORS 2060).